The sequence spans 248 residues: 5'-nucleotidase SurE (248 aa).

Residues aspartate 8, aspartate 9, serine 39, and asparagine 92 each coordinate a divalent metal cation.

The protein belongs to the SurE nucleotidase family. The cofactor is a divalent metal cation.

It localises to the cytoplasm. It carries out the reaction a ribonucleoside 5'-phosphate + H2O = a ribonucleoside + phosphate. In terms of biological role, nucleotidase that shows phosphatase activity on nucleoside 5'-monophosphates. This Tolumonas auensis (strain DSM 9187 / NBRC 110442 / TA 4) protein is 5'-nucleotidase SurE.